The primary structure comprises 312 residues: Fasciclin-like arabinogalactan protein elcF (312 aa).

The N-terminal stretch at 1–16 (MKLFTLLLPALTSAHS) is a signal peptide. FAS1 domains lie at 17–160 (LSTL…NASM) and 162–289 (LPHN…DKVL). Asn-48, Asn-68, Asn-113, Asn-157, and Asn-165 each carry an N-linked (GlcNAc...) asparagine glycan.

Belongs to the fasciclin-like AGP family.

The protein operates within secondary metabolite biosynthesis. Functionally, fasciclin-like arabinogalactan protein; part of the gene cluster that mediates the biosynthesis of elsinochrome C, a perelyenequinone phytotoxin structurally similar to cercosporin. The first step of elsinochrome C biosynthesis is performed by the polyketide synthase elcA which catalyzes the formation of nor-toralactone. The starter unit acyltransferase (SAT) domain of elcA initiates polyketide extension by the selective utilization of acetyl-CoA, which is elongated to the heptaketide in the beta-ketoacyl synthase (KS) domain by successive condensations with six malonyl units introduced by the malonyl acyltransferase (MAT) domain. The product template (PT) domain catalyzes C4-C9 and C2-C11 aldol cyclizations and dehydrations to a trihydroxynaphthalene, which is thought to be delivered to the thioesterase (TE) domain for product release. The bifunctional enzyme elcB then methylates nor-toralactone to toralactone before conducting an unusual oxidative aromatic ring opening. The next step in perylenequinone biosynthesis is an O-methylation at the nascent OH-6 of the elcB product performed by the O-methyltransferase elcD. The oxidative coupling of the two monomeric naphthol units in perylenequinone biosynthesis is catalyzed by the FAD-dependent monooxygenase elcE and the multicopper oxidase elcG. ElcG might catalyze the first intermolecular coupling in a regio- and stereo-selective manner via a phenol radical coupling mechanism and the elcE could forge the second C-C bond intramolecularly via a hydride transfer mechanism. The fasciclin domain-containing protein elcF might also play a role duting this step. The last piece of the puzzle in the biosynthesis of elsinochrome C is the additional annulation by enolate coupling to afford the dihydrobenzo(ghi)perylenequinone system, catalyzed by the FAD-dependent monooxygenase elcH. The sequence is that of Fasciclin-like arabinogalactan protein elcF from Phaeosphaeria nodorum (strain SN15 / ATCC MYA-4574 / FGSC 10173) (Glume blotch fungus).